A 360-amino-acid polypeptide reads, in one-letter code: Phospho-N-acetylmuramoyl-pentapeptide-transferase (360 aa).

10 helical membrane passes run 26–46 (AIVSLLTALFISLWMGPRLIA), 72–92 (PTMGGIMILTSIVVSVLLWAY), 94–114 (SNPYVWCVLFVLVGYGAVGFV), 132–152 (WKYFWMSLIALTVAFALYITG), 168–188 (VMPQLGIFYVLLAYFVIVGTG), 199–219 (GLAIMPTVLVAGGFALVAWAT), 236–256 (AGELVIVCTAIVGAGLGFLWF), 263–283 (VFMGDVGSLALGGALGIIAVL), 288–308 (FLLVIMGGVFVVETLSVILQV), and 338–358 (VIVRFWVISLMLVLIGLATLK).

Belongs to the glycosyltransferase 4 family. MraY subfamily. Mg(2+) serves as cofactor.

Its subcellular location is the cell inner membrane. It carries out the reaction UDP-N-acetyl-alpha-D-muramoyl-L-alanyl-gamma-D-glutamyl-meso-2,6-diaminopimeloyl-D-alanyl-D-alanine + di-trans,octa-cis-undecaprenyl phosphate = di-trans,octa-cis-undecaprenyl diphospho-N-acetyl-alpha-D-muramoyl-L-alanyl-D-glutamyl-meso-2,6-diaminopimeloyl-D-alanyl-D-alanine + UMP. It participates in cell wall biogenesis; peptidoglycan biosynthesis. Functionally, catalyzes the initial step of the lipid cycle reactions in the biosynthesis of the cell wall peptidoglycan: transfers peptidoglycan precursor phospho-MurNAc-pentapeptide from UDP-MurNAc-pentapeptide onto the lipid carrier undecaprenyl phosphate, yielding undecaprenyl-pyrophosphoryl-MurNAc-pentapeptide, known as lipid I. The sequence is that of Phospho-N-acetylmuramoyl-pentapeptide-transferase from Cronobacter sakazakii (strain ATCC BAA-894) (Enterobacter sakazakii).